A 243-amino-acid chain; its full sequence is GrpE protein homolog, mitochondrial (243 aa).

The tract at residues 42–75 (TEASKKEGKEDKAEAQGSQEPETAAETNKEAEGA) is disordered. The segment covering 44–55 (ASKKEGKEDKAE) has biased composition (basic and acidic residues).

Belongs to the GrpE family. In terms of assembly, component of the PAM complex, at least composed of mtHsp70, MGE1, TIM44, PAM16, PAM17 and PAM18.

It is found in the mitochondrion matrix. In terms of biological role, essential component of the PAM complex, a complex required for the translocation of transit peptide-containing proteins from the inner membrane into the mitochondrial matrix in an ATP-dependent manner. Seems to control the nucleotide-dependent binding of SSC1 to substrate proteins. The sequence is that of GrpE protein homolog, mitochondrial (mge1) from Debaryomyces hansenii (strain ATCC 36239 / CBS 767 / BCRC 21394 / JCM 1990 / NBRC 0083 / IGC 2968) (Yeast).